Reading from the N-terminus, the 327-residue chain is Mitochondrial carnitine carrier (327 aa).

Over residues 1–11 (MSSDTSLSESS) the composition is skewed to low complexity. Residues 1-29 (MSSDTSLSESSLLKEESGSLTKSRPPIKS) form a disordered region. 6 consecutive transmembrane segments (helical) span residues 33 to 49 (RENI…GVCA), 107 to 123 (LGVT…YDVG), 141 to 162 (MGQM…TAPT), 196 to 212 (GSLA…ALYF), 244 to 260 (LAGG…VFPI), and 293 to 313 (FFPG…ATFL). Solcar repeat units lie at residues 33-126 (RENI…GKKL), 139-221 (LTMG…SKNY), and 237-321 (VNIL…THSL).

The protein belongs to the mitochondrial carrier (TC 2.A.29) family.

It is found in the mitochondrion inner membrane. In terms of biological role, transports carnitine, acetylcarnitine, propionylcarnitine and to a much lower extent medium- and long-chain acylcarnitines. The polypeptide is Mitochondrial carnitine carrier (CRC1) (Saccharomyces cerevisiae (strain ATCC 204508 / S288c) (Baker's yeast)).